A 282-amino-acid chain; its full sequence is S-formylglutathione hydrolase (282 aa).

N-acetylalanine is present on A2. N6-succinyllysine is present on K4. Residues S149, D226, and H260 each act as charge relay system in the active site.

It belongs to the esterase D family. As to quaternary structure, homodimer.

The protein localises to the cytoplasm. The protein resides in the cytoplasmic vesicle. It catalyses the reaction S-formylglutathione + H2O = formate + glutathione + H(+). In terms of biological role, serine hydrolase involved in the detoxification of formaldehyde. The polypeptide is S-formylglutathione hydrolase (ESD) (Bos taurus (Bovine)).